Consider the following 258-residue polypeptide: Tegument protein VP22 (258 aa).

Residues 66–143 (VQPAARGRDR…RAPPGANAVA (78 aa)) are disordered. The segment covering 77–118 (AAAGTTVAAPAAAPARRSSSRASSRPPRAAADPPVLRPATRG) has biased composition (low complexity). Positions 131–134 (PRPR) match the Nuclear localization signal motif. A Nuclear export signal motif is present at residues 204–216 (LDRMLKSAAIRIL). A disordered region spans residues 234–258 (RAQRPAARGSTSGGESRLRGERARP). The segment covering 249–258 (SRLRGERARP) has biased composition (basic and acidic residues).

This sequence belongs to the alphaherpesvirinae VP22 tegument protein family. As to quaternary structure, interacts with gE (via C-terminus); this interaction is necessary for the recruitment of VP22 to the Golgi and its packaging into virions. Interacts with gM (via C-terminus). Interacts with VP16; this interaction allows the formation of a tripartite complex composed of VP16, VP22 and UL41/VHS. Interacts with the capsid-binding protein UL16. Interacts with host CGAS. Highly phosphorylated in the host cell. Packaging is selective for underphosphorylated forms.

Its subcellular location is the virion tegument. It is found in the host cytoplasm. The protein resides in the host nucleus. The protein localises to the host Golgi apparatus. Its function is as follows. Tegument protein that plays different roles during the time course of infection. Participates in both the accumulation of viral mRNAs and viral protein translation at late time of infection. Modulates the RNase activity of the virion host shutoff protein UL41 probably to ensure necessary levels of key cellular mRNAs and proteins. Plays a role in microtubule reorganization that occurs after viral infection by stabilizing microtubule network. Plays a role in the inhibition of host innate immune system by targeting the CGAS enzymatic activity which is the principal cytosolic DNA sensor that detects invading viral DNA. Acts by mediating disruption of liquid-like droplets in which CGAS is activated, thereby preventing CGAS activity. The chain is Tegument protein VP22 from Bovine herpesvirus 1.1 (strain Cooper) (BoHV-1).